Consider the following 549-residue polypeptide: Eukaryotic translation initiation factor 3 subunit D-2 (549 aa).

Residues 107-157 (ARVKGRSGRGPGMLGVAGSMAGGGTTSGSTKYGKGRESRRNQGRRFARNAP) are disordered. Positions 114 to 132 (GRGPGMLGVAGSMAGGGTT) are enriched in gly residues. Positions 288–302 (QFDLLTVNETSLEPP) are RNA gate. A disordered region spans residues 527–549 (NSFDSDAEDEENSSEPFANSLDN). A compositionally biased stretch (acidic residues) spans 529–539 (FDSDAEDEENS).

Belongs to the eIF-3 subunit D family. In terms of assembly, component of the eukaryotic translation initiation factor 3 (eIF-3) complex. The eIF-3 complex interacts with pix.

Its subcellular location is the cytoplasm. Its function is as follows. mRNA cap-binding component of the eukaryotic translation initiation factor 3 (eIF-3) complex, which is involved in protein synthesis of a specialized repertoire of mRNAs and, together with other initiation factors, stimulates binding of mRNA and methionyl-tRNAi to the 40S ribosome. The eIF-3 complex specifically targets and initiates translation of a subset of mRNAs involved in cell proliferation. In the eIF-3 complex, eif3d specifically recognizes and binds the 7-methylguanosine cap of a subset of mRNAs. This chain is Eukaryotic translation initiation factor 3 subunit D-2, found in Drosophila ananassae (Fruit fly).